Here is a 250-residue protein sequence, read N- to C-terminus: UPF0524 protein C3orf70 (250 aa).

A disordered region spans residues Glu201 to Val250. Residues Ser202–Glu229 are compositionally biased toward acidic residues.

This sequence belongs to the UPF0524 family.

May play a role in neuronal and neurobehavioral development. This is UPF0524 protein C3orf70 (C3orf70) from Homo sapiens (Human).